The following is a 99-amino-acid chain: Microcin E492 (99 aa).

The signal sequence occupies residues 1–15 (MREISQKDLNLAFGA). Residues 80 to 99 (SWNGSGSGYNSATSSSGSGS) form a disordered region. A compositionally biased stretch (low complexity) spans 87–99 (GYNSATSSSGSGS). At Ser-99 the chain carries Serine microcin E492 siderophore ester.

It belongs to the class IIa microcin family. As to quaternary structure, multimer. Possibly forms a homodimer or a homotrimer. In terms of processing, the C-terminal Ser is modified by attachment to a siderophore similar to enterobactin, which can bind one atom of iron. The modification consists of an ester linkage of the serine carboxyl to O6 of a glucose which is linked by a C-glycosidic bond to the 5'-benzoyl of a linear triester of N-(2,3-dihydroxybenzoyl)serine. Presence of the siderophore ester increases the antibacterial activity of the protein.

In terms of biological role, channel-forming bacteriocin. Forms cation-selective channels. Active on enterobacteria, with highest activity against E.coli. Not active on other Gram-negative bacteria, Gram-positive bacteria or fungi. The unmodified protein is active against E.coli and S.enteritidis. When the siderophore ester is present at Ser-99, antibacterial activity against these species is increased and activity is also detected against E.cloacae and K.pneumoniae. Neutralized by its immunity protein MceB. The protein is Microcin E492 of Klebsiella pneumoniae.